The sequence spans 502 residues: Smr domain-containing protein C1235.03 (502 aa).

Residues Leu150–Glu184 are disordered. Residues His157 to Asn171 are compositionally biased toward basic residues. The Smr domain maps to Ser411–Ile459.

It is found in the nucleus. The protein resides in the nucleolus. The chain is Smr domain-containing protein C1235.03 from Schizosaccharomyces pombe (strain 972 / ATCC 24843) (Fission yeast).